A 279-amino-acid chain; its full sequence is Putative pyruvate, phosphate dikinase regulatory protein (279 aa).

Residue 153-160 (GISRTSKT) coordinates ADP.

This sequence belongs to the pyruvate, phosphate/water dikinase regulatory protein family. PDRP subfamily.

It carries out the reaction N(tele)-phospho-L-histidyl/L-threonyl-[pyruvate, phosphate dikinase] + ADP = N(tele)-phospho-L-histidyl/O-phospho-L-threonyl-[pyruvate, phosphate dikinase] + AMP + H(+). The catalysed reaction is N(tele)-phospho-L-histidyl/O-phospho-L-threonyl-[pyruvate, phosphate dikinase] + phosphate + H(+) = N(tele)-phospho-L-histidyl/L-threonyl-[pyruvate, phosphate dikinase] + diphosphate. Its function is as follows. Bifunctional serine/threonine kinase and phosphorylase involved in the regulation of the pyruvate, phosphate dikinase (PPDK) by catalyzing its phosphorylation/dephosphorylation. The protein is Putative pyruvate, phosphate dikinase regulatory protein of Brucella abortus (strain 2308).